We begin with the raw amino-acid sequence, 434 residues long: MPSAPQRPLFSRGSWPEARRLADVLRQETTGGLLLLVFTVIALVWANVAGNSYEEVRQFHLGPAALHLDLSIEHWAADGLLAIFFFVTGLELKKEFVAGDLRSPRAAALPIAAAVGGMAVPALLFVLVNVLHPDSPEGALVGWATPTATDIAFALGILAVVGSHLPSALRTFLLTLAVVDDLLGITVIAIFYTEQVHWTPLLLALLTLAAFTVAVQRRVRSWWLLVPLALATWALVHASGIHATVAGVLLGLVVPVLRSEEHGGPEAGPGLSEHFEHRWRPLSTGFAVPVFALFSAGVAIGGVSGFTAAVQDPVALGVIAGLVLGKPIGIVGTTWLLAKLTRAELDENLRWVDVLGMAMLAGMGFTVSLLIGSLAFGEGTAAGEHVTLGVLVGSLLSAVLAAVVLSRRNRVYRRIEAEERVDADGNGVPDVYER.

Transmembrane regions (helical) follow at residues threonine 30–glycine 50, leucine 70–leucine 90, alanine 108–valine 128, valine 141–valine 161, phenylalanine 172–tyrosine 192, glutamine 195–valine 215, phenylalanine 286–phenylalanine 306, valine 318–alanine 338, valine 354–leucine 374, and valine 386–serine 406.

Belongs to the NhaA Na(+)/H(+) (TC 2.A.33) antiporter family.

The protein resides in the cell membrane. It catalyses the reaction Na(+)(in) + 2 H(+)(out) = Na(+)(out) + 2 H(+)(in). Its function is as follows. Na(+)/H(+) antiporter that extrudes sodium in exchange for external protons. This is Na(+)/H(+) antiporter NhaA 1 from Kineococcus radiotolerans (strain ATCC BAA-149 / DSM 14245 / SRS30216).